The primary structure comprises 458 residues: cAMP-dependent protein kinase regulatory subunit (458 aa).

The interval 28 to 222 (QFAANYFNKK…GLESAVGKNF (195 aa)) is dimerization and phosphorylation. Residue Ser184 is modified to Phosphoserine. Residues 223–338 (LFNK…FLKS), Glu288, Arg297, 341–457 (LLKS…RADK), Glu407, and Arg416 each bind 3',5'-cyclic AMP.

Belongs to the cAMP-dependent kinase regulatory chain family. As to quaternary structure, tetramer, composed of 2 regulatory (R) and 2 catalytic (C) subunits. In the presence of cAMP it dissociates into 2 active monomeric C subunits and an R dimer.

This Eremothecium gossypii (strain ATCC 10895 / CBS 109.51 / FGSC 9923 / NRRL Y-1056) (Yeast) protein is cAMP-dependent protein kinase regulatory subunit (PKAR).